A 128-amino-acid chain; its full sequence is Large ribosomal subunit protein bL17 (128 aa).

The protein belongs to the bacterial ribosomal protein bL17 family. As to quaternary structure, part of the 50S ribosomal subunit. Contacts protein L32.

The chain is Large ribosomal subunit protein bL17 from Ehrlichia ruminantium (strain Gardel).